Consider the following 421-residue polypeptide: Gamma-glutamyl phosphate reductase (421 aa).

It belongs to the gamma-glutamyl phosphate reductase family.

It localises to the cytoplasm. It carries out the reaction L-glutamate 5-semialdehyde + phosphate + NADP(+) = L-glutamyl 5-phosphate + NADPH + H(+). It participates in amino-acid biosynthesis; L-proline biosynthesis; L-glutamate 5-semialdehyde from L-glutamate: step 2/2. Catalyzes the NADPH-dependent reduction of L-glutamate 5-phosphate into L-glutamate 5-semialdehyde and phosphate. The product spontaneously undergoes cyclization to form 1-pyrroline-5-carboxylate. This is Gamma-glutamyl phosphate reductase from Nocardia farcinica (strain IFM 10152).